We begin with the raw amino-acid sequence, 788 residues long: LPS-assembly protein LptD (788 aa).

An N-terminal signal peptide occupies residues 1 to 23 (MSLTSRSLLATMISLALYGPAMA).

Belongs to the LptD family. Component of the lipopolysaccharide transport and assembly complex. Interacts with LptE and LptA.

Its subcellular location is the cell outer membrane. Functionally, together with LptE, is involved in the assembly of lipopolysaccharide (LPS) at the surface of the outer membrane. The protein is LPS-assembly protein LptD of Photobacterium profundum (strain SS9).